The chain runs to 122 residues: Toxin CSTX-1 (122 aa).

Positions 1–20 are cleaved as a signal peptide; that stretch reads MKVLIISAVLFITIFSNISA. Positions 21–47 are excised as a propeptide; sequence EIEDDFLEDESFEAEDIIPFFENEQAR. Disulfide bonds link Cys-49/Cys-64, Cys-56/Cys-73, Cys-63/Cys-91, and Cys-75/Cys-89. Residues 99-112 form a predicted alpha-helix region; the sequence is AIETGLNIFRGLFK. Arg-108 carries the arginine amide; in CSTX-2a modification. The residue at position 121 (Lys-121) is a Lysine amide; in omega-ctenitoxin-Cs1a.

The protein belongs to the neurotoxin 19 (CSTX) family. 04 (U1-Lctx) subfamily. Monomer. Interacts with CSTX-13 (AC P83919) (Kd=430 nM), but does not interact with CSTX-9 (AC P58604). As to expression, expressed by the venom gland.

The protein localises to the secreted. It localises to the target cell membrane. Spider venom toxin that shows calcium channel blocking activity and exhibits cytolytic activity by affecting the outer leaflet curvature and/or pore formation across the membrane. It blocks L-type calcium channels (Cav1/CACNA1) in mammalian neurons at nanomolar concentrations. Furthermore, it produces a slow voltage-independent block of mid/low and high voltage-activated calcium channels in cockroach neurons. Potassium ions, histamine, M-ctenitoxin-Cs1a (AC P83619), CSTX-9 (AC P58604), and CSTX-13 (AC P83919) synergistically increase the insecticidal activity of this toxin. In vivo, it causes paralysis in blow flies and provokes death in drosophila. Its function is as follows. Blocks voltage-activated calcium channels (Cav). Does not induce cell membrane permeability increase when tested on Xenopus oocytes. No alpha-helical structures are detectable. Is 7-fold less neurotoxic than omega-ctenitoxin-Cs1a on drosophila flies. Functionally, blocks voltage-activated calcium channels (Cav). Is 190-fold less neurotoxic than omega-ctenitoxin-Cs1a on drosophila flies. In Cupiennius salei (American wandering spider), this protein is Toxin CSTX-1.